The following is a 529-amino-acid chain: uncharacterized protein (529 aa).

One can recognise an Arf-GAP domain in the interval 13 to 129; the sequence is QTAMRKMRAL…LSTLCQEAQR (117 aa). The segment at 28–51 adopts a C4-type zinc-finger fold; the sequence is CFDCGARNPTWCTVTYGVFLCIDC. Residues 291-301 are compositionally biased toward basic and acidic residues; sequence QMEAKVAKDPT. Disordered stretches follow at residues 291-313, 335-357, 398-424, and 468-493; these read QMEA…GMGG, VLTF…DDKY, KSRY…GASP, and FGSE…SDLK. The span at 399–420 shows a compositional bias: low complexity; sequence SRYTASSSSSSTSRAPTTRLTA. Positions 476–487 are enriched in polar residues; it reads NGSQQRQSSQVP.

In terms of biological role, GTPase-activating protein for the ADP ribosylation factor family. This is an uncharacterized protein from Caenorhabditis elegans.